A 175-amino-acid chain; its full sequence is MAAVSMSVVLRQTLWRRRAVAVAALSVSRVPTRSLRTSTWRLAQDQTQDTQLITVDEKLDITTLTGVPEEHIKTRKVRIFVPARNNMQSGVNNTKKWKMEFDTRERWENPLMGWASTADPLSNMVLTXSTKEDAVSFAEKNGWSYDIEERKVPKPKSKSYGANFSWNKRTRVSTK.

The N-terminal 42 residues, 1 to 42 (MAAVSMSVVLRQTLWRRRAVAVAALSVSRVPTRSLRTSTWRL), are a transit peptide targeting the mitochondrion. Positions 149 to 175 (ERKVPKPKSKSYGANFSWNKRTRVSTK) are disordered.

It belongs to the complex I NDUFS4 subunit family. As to quaternary structure, mammalian complex I is composed of 45 different subunits. This is a component of the iron-sulfur (IP) fragment of the enzyme. Interacts with BCAP31 and TOMM40; the interaction mediates its translocation to the mitochondria; the interaction with BCAP31 is direct.

It is found in the mitochondrion inner membrane. In terms of biological role, accessory subunit of the mitochondrial membrane respiratory chain NADH dehydrogenase (Complex I), that is believed not to be involved in catalysis. Complex I functions in the transfer of electrons from NADH to the respiratory chain. The immediate electron acceptor for the enzyme is believed to be ubiquinone. In Pan troglodytes (Chimpanzee), this protein is NADH dehydrogenase [ubiquinone] iron-sulfur protein 4, mitochondrial (NDUFS4).